The sequence spans 34 residues: U10-ctenitoxin-Pr1a (34 aa).

Disulfide bonds link Cys-2–Cys-15, Cys-9–Cys-20, Cys-14–Cys-31, and Cys-22–Cys-29.

Expressed by the venom gland.

The protein resides in the secreted. Functionally, non-toxic to mice and insects. The sequence is that of U10-ctenitoxin-Pr1a from Phoneutria reidyi (Brazilian Amazonian armed spider).